Here is a 122-residue protein sequence, read N- to C-terminus: Large ribosomal subunit protein uL14c (122 aa).

This sequence belongs to the universal ribosomal protein uL14 family. Part of the 50S ribosomal subunit.

The protein resides in the plastid. It is found in the chloroplast. Binds to 23S rRNA. The chain is Large ribosomal subunit protein uL14c from Drimys granadensis.